The following is a 412-amino-acid chain: Arginine biosynthesis bifunctional protein ArgJ (412 aa).

Residues Thr162, Lys188, Thr199, Glu285, Asn407, and Thr412 each contribute to the substrate site. Thr199 (nucleophile) is an active-site residue.

Belongs to the ArgJ family. In terms of assembly, heterotetramer of two alpha and two beta chains.

The protein resides in the cytoplasm. The catalysed reaction is N(2)-acetyl-L-ornithine + L-glutamate = N-acetyl-L-glutamate + L-ornithine. It catalyses the reaction L-glutamate + acetyl-CoA = N-acetyl-L-glutamate + CoA + H(+). The protein operates within amino-acid biosynthesis; L-arginine biosynthesis; L-ornithine and N-acetyl-L-glutamate from L-glutamate and N(2)-acetyl-L-ornithine (cyclic): step 1/1. It functions in the pathway amino-acid biosynthesis; L-arginine biosynthesis; N(2)-acetyl-L-ornithine from L-glutamate: step 1/4. Its function is as follows. Catalyzes two activities which are involved in the cyclic version of arginine biosynthesis: the synthesis of N-acetylglutamate from glutamate and acetyl-CoA as the acetyl donor, and of ornithine by transacetylation between N(2)-acetylornithine and glutamate. This chain is Arginine biosynthesis bifunctional protein ArgJ, found in Staphylococcus saprophyticus subsp. saprophyticus (strain ATCC 15305 / DSM 20229 / NCIMB 8711 / NCTC 7292 / S-41).